The sequence spans 530 residues: RNA-binding protein 39 (530 aa).

Residues 1–146 form a disordered region; it reads MADDIDIEAM…PVREPIDNLT (146 aa). Ala-2 carries the post-translational modification N-acetylalanine. The span at 14 to 32 shows a compositional bias: basic and acidic residues; the sequence is PYKKDENKLNSANGHEERS. Basic residues-rich tracts occupy residues 33-56 and 64-95; these read KKRKKSKSRSRSHERKRSKSKERK and KKSKSRERKRSRSKERRRSRSRSRDRRFRGRY. Position 95 is a phosphotyrosine (Tyr-95). Ser-97 and Ser-100 each carry phosphoserine. Residue Lys-111 forms a Glycyl lysine isopeptide (Lys-Gly) (interchain with G-Cter in SUMO2) linkage. Ser-117 is subject to Phosphoserine. Residue Lys-119 forms a Glycyl lysine isopeptide (Lys-Gly) (interchain with G-Cter in SUMO2) linkage. The span at 119-130 shows a compositional bias: basic residues; that stretch reads KLSRRRSRSKSP. 2 positions are modified to phosphoserine: Ser-121 and Ser-136. Basic and acidic residues predominate over residues 131 to 146; it reads FRKDKSPVREPIDNLT. At Thr-146 the chain carries Phosphothreonine. The RRM 1 domain maps to 153–230; the sequence is RTVFCMQLAA…VPIIVQASQA (78 aa). Lys-244 participates in a covalent cross-link: Glycyl lysine isopeptide (Lys-Gly) (interchain with G-Cter in SUMO2). Positions 250 to 328 constitute an RRM 2 domain; sequence MRLYVGSLHF…RPMKVGHVTE (79 aa). The interval 291 to 355 is activating domain; sequence KGYGFITFSD…RTGIDLGTTG (65 aa). Residues 291-406 form an interaction with JUN region; that stretch reads KGYGFITFSD…IDLQTRLSQQ (116 aa). Phosphoserine occurs at positions 334, 337, and 341. Residues 355-406 are interaction with ESR1 and ESR2; it reads GRLQLMARLAEGTGLQIPPAAQQALQMSGSLAFGAVAEFSFVIDLQTRLSQQ. Residues 406–530 are interaction with NCOA6; it reads QTEASALAAA…ATQLLVPSRR (125 aa). The region spanning 445–508 is the RRM 3 domain; the sequence is EIKDDVIEEC…KMITAAYVPL (64 aa).

This sequence belongs to the splicing factor SR family. Interacts with NCOA6 and JUN. Interacts with ESR1 and ESR2, in the presence of estradiol (E2). Interacts with RSRC1 (via Arg/Ser-rich domain). Interacts with SF3B1. Interacts with ZNF106 (via N-terminus).

The protein localises to the nucleus. Functionally, RNA-binding protein that acts as a pre-mRNA splicing factor. Acts by promoting exon inclusion via regulation of exon cassette splicing. Also acts as a transcriptional coactivator for steroid nuclear receptors ESR1/ER-alpha and ESR2/ER-beta, and JUN/AP-1, independently of the pre-mRNA splicing factor activity. The protein is RNA-binding protein 39 (Rbm39) of Mus musculus (Mouse).